A 605-amino-acid polypeptide reads, in one-letter code: Leucine-rich repeat-containing protein 40 (605 aa).

The segment at 1–26 is disordered; that stretch reads MSRFRRGGKAPDPLSGFRAPKEQEPA. LRR repeat units lie at residues 83 to 104, 106 to 127, 129 to 151, 152 to 173, 175 to 196, 198 to 219, 221 to 242, 244 to 265, 266 to 287, 290 to 311, 313 to 335, 336 to 357, 429 to 450, 453 to 475, 476 to 497, 499 to 520, 522 to 543, 546 to 567, and 569 to 590; these read DLTK…ISLL, ALVV…IKEL, NLQK…QHLQ, NLKS…IGHL, ILEE…VGQL, GLVK…IGKM, NLKQ…VAGM, SLEQ…PFLT, KLKE…HLQN, SLSV…ISLL, GLER…GSLP, NLKS…ILNK, FITT…IVEM, SVCD…CMLL, KLTH…MEAM, RLQS…LYRI, TLET…QLIK, KLST…LGNC, and SLRA…ILAK.

This is Leucine-rich repeat-containing protein 40 (lrrc40) from Xenopus tropicalis (Western clawed frog).